The sequence spans 170 residues: Crossover junction endodeoxyribonuclease RuvC (170 aa).

Residues Asp11, Glu71, and Asp143 contribute to the active site. Mg(2+)-binding residues include Asp11, Glu71, and Asp143.

Belongs to the RuvC family. In terms of assembly, homodimer which binds Holliday junction (HJ) DNA. The HJ becomes 2-fold symmetrical on binding to RuvC with unstacked arms; it has a different conformation from HJ DNA in complex with RuvA. In the full resolvosome a probable DNA-RuvA(4)-RuvB(12)-RuvC(2) complex forms which resolves the HJ. Mg(2+) serves as cofactor.

The protein resides in the cytoplasm. The enzyme catalyses Endonucleolytic cleavage at a junction such as a reciprocal single-stranded crossover between two homologous DNA duplexes (Holliday junction).. Functionally, the RuvA-RuvB-RuvC complex processes Holliday junction (HJ) DNA during genetic recombination and DNA repair. Endonuclease that resolves HJ intermediates. Cleaves cruciform DNA by making single-stranded nicks across the HJ at symmetrical positions within the homologous arms, yielding a 5'-phosphate and a 3'-hydroxyl group; requires a central core of homology in the junction. The consensus cleavage sequence is 5'-(A/T)TT(C/G)-3'. Cleavage occurs on the 3'-side of the TT dinucleotide at the point of strand exchange. HJ branch migration catalyzed by RuvA-RuvB allows RuvC to scan DNA until it finds its consensus sequence, where it cleaves and resolves the cruciform DNA. This chain is Crossover junction endodeoxyribonuclease RuvC, found in Rhizobium rhizogenes (strain K84 / ATCC BAA-868) (Agrobacterium radiobacter).